A 293-amino-acid polypeptide reads, in one-letter code: Ribosomal protein L11 methyltransferase (293 aa).

Residues Thr145, Gly166, Asp188, and Asn230 each coordinate S-adenosyl-L-methionine.

This sequence belongs to the methyltransferase superfamily. PrmA family.

It localises to the cytoplasm. The enzyme catalyses L-lysyl-[protein] + 3 S-adenosyl-L-methionine = N(6),N(6),N(6)-trimethyl-L-lysyl-[protein] + 3 S-adenosyl-L-homocysteine + 3 H(+). Functionally, methylates ribosomal protein L11. This is Ribosomal protein L11 methyltransferase from Salmonella newport (strain SL254).